Reading from the N-terminus, the 118-residue chain is Small ribosomal subunit protein uS13 (118 aa).

The tract at residues 94-118 (SLPLRGQRTKTNARTRKGPRKPIRK) is disordered.

The protein belongs to the universal ribosomal protein uS13 family. As to quaternary structure, part of the 30S ribosomal subunit. Forms a loose heterodimer with protein S19. Forms two bridges to the 50S subunit in the 70S ribosome.

Its function is as follows. Located at the top of the head of the 30S subunit, it contacts several helices of the 16S rRNA. In the 70S ribosome it contacts the 23S rRNA (bridge B1a) and protein L5 of the 50S subunit (bridge B1b), connecting the 2 subunits; these bridges are implicated in subunit movement. Contacts the tRNAs in the A and P-sites. The polypeptide is Small ribosomal subunit protein uS13 (Shewanella denitrificans (strain OS217 / ATCC BAA-1090 / DSM 15013)).